The following is a 457-amino-acid chain: Protein OS-9 homolog (457 aa).

The signal sequence occupies residues Met-1–Ala-22. 2 N-linked (GlcNAc...) asparagine glycosylation sites follow: Asn-47 and Asn-71. Residues Asn-104 to Leu-222 form the MRH domain. Position 116 (Trp-116) interacts with a mannooligosaccharide derivative. Residues Asn-142 and Asn-147 are each glycosylated (N-linked (GlcNAc...) asparagine). 2 cysteine pairs are disulfide-bonded: Cys-174/Cys-208 and Cys-189/Cys-220. A mannooligosaccharide derivative-binding residues include Asp-175, Arg-181, Glu-204, and Tyr-210. Residue Asn-389 is glycosylated (N-linked (GlcNAc...) asparagine).

This sequence belongs to the OS-9 family. In terms of assembly, interacts with missfolded ER lumenal proteins.

It localises to the endoplasmic reticulum membrane. Lectin involved in the quality control of the secretory pathway. As a member of the endoplasmic reticulum-associated degradation lumenal (ERAD-L) surveillance system, targets misfolded endoplasmic reticulum lumenal glycoproteins for degradation. This is Protein OS-9 homolog (YOS9) from Kluyveromyces lactis (strain ATCC 8585 / CBS 2359 / DSM 70799 / NBRC 1267 / NRRL Y-1140 / WM37) (Yeast).